We begin with the raw amino-acid sequence, 117 residues long: Ig heavy chain V region RF (117 aa).

Positions 1–19 are cleaved as a signal peptide; that stretch reads MNFGLRLIFLVLVLKGVLC. The tract at residues 20 to 49 is framework-1; the sequence is DVKLVESGGGLVKLGGSLKLSCAASGFTFS. An intrachain disulfide couples cysteine 41 to cysteine 115. A complementarity-determining-1 region spans residues 50 to 54; sequence SYYMS. The framework-2 stretch occupies residues 55 to 68; it reads WVRQTPEKRLELVA. The interval 69-85 is complementarity-determining-2; that stretch reads AINSNGGSTYYPDTVKG. A framework-3 region spans residues 86–117; sequence RFTISRDNAKNTLYLQMSSLKSEDTALYYCAR.

This chain is Ig heavy chain V region RF, found in Mus musculus (Mouse).